The sequence spans 347 residues: NADH-ubiquinone oxidoreductase chain 2 (347 aa).

The next 9 membrane-spanning stretches (helical) occupy residues 3-23 (PPIL…VLMS), 25-45 (HWLM…PILM), 67-87 (SMLL…WAVL), 150-170 (NPHL…WGGL), 178-198 (ILAY…TYSP), 201-221 (MLLN…LFMF), 237-257 (LPLI…LPPL), 274-294 (NMII…YFYM), and 323-343 (MTML…TPMM).

The protein belongs to the complex I subunit 2 family. As to quaternary structure, core subunit of respiratory chain NADH dehydrogenase (Complex I) which is composed of 45 different subunits. Interacts with TMEM242.

The protein resides in the mitochondrion inner membrane. It carries out the reaction a ubiquinone + NADH + 5 H(+)(in) = a ubiquinol + NAD(+) + 4 H(+)(out). Core subunit of the mitochondrial membrane respiratory chain NADH dehydrogenase (Complex I) which catalyzes electron transfer from NADH through the respiratory chain, using ubiquinone as an electron acceptor. Essential for the catalytic activity and assembly of complex I. The sequence is that of NADH-ubiquinone oxidoreductase chain 2 from Mustela kathiah (Yellow-bellied weasel).